The primary structure comprises 219 residues: Virginiamycin A acetyltransferase (219 aa).

The active site involves His-87.

The protein belongs to the transferase hexapeptide repeat family.

Its function is as follows. Inactivates the A compounds of virginiamycin-like antibiotics, thus providing resistance to these antibiotics. The chain is Virginiamycin A acetyltransferase (vat) from Staphylococcus aureus.